A 440-amino-acid polypeptide reads, in one-letter code: Adenylosuccinate synthetase (440 aa).

Residues 11–17 and 39–41 each bind GTP; these read GDEGKGG and GHT. Asp12 functions as the Proton acceptor in the catalytic mechanism. Residues Asp12 and Gly39 each coordinate Mg(2+). IMP contacts are provided by residues 12-15, 37-40, Thr127, Arg141, Gln230, Thr245, and Arg311; these read DEGK and NAGH. Residue His40 is the Proton donor of the active site. 307-313 serves as a coordination point for substrate; it reads TVTGRPR. Residues Arg313, 339–341, and 424–426 contribute to the GTP site; these read HLD and GVG.

The protein belongs to the adenylosuccinate synthetase family. Homodimer. The cofactor is Mg(2+).

The protein localises to the cytoplasm. It catalyses the reaction IMP + L-aspartate + GTP = N(6)-(1,2-dicarboxyethyl)-AMP + GDP + phosphate + 2 H(+). The protein operates within purine metabolism; AMP biosynthesis via de novo pathway; AMP from IMP: step 1/2. Functionally, plays an important role in the de novo pathway of purine nucleotide biosynthesis. Catalyzes the first committed step in the biosynthesis of AMP from IMP. This Halobacterium salinarum (strain ATCC 29341 / DSM 671 / R1) protein is Adenylosuccinate synthetase.